The primary structure comprises 206 residues: Small ribosomal subunit protein uS2 (206 aa).

This sequence belongs to the universal ribosomal protein uS2 family.

The chain is Small ribosomal subunit protein uS2 from Pyrobaculum neutrophilum (strain DSM 2338 / JCM 9278 / NBRC 100436 / V24Sta) (Thermoproteus neutrophilus).